A 486-amino-acid chain; its full sequence is Cobyric acid synthase (486 aa).

The GATase cobBQ-type domain maps to 251–439 (RAKIVVPMLS…VHGLFERGEA (189 aa)). The Nucleophile role is filled by cysteine 333. Residue histidine 431 is part of the active site.

It belongs to the CobB/CobQ family. CobQ subfamily.

It participates in cofactor biosynthesis; adenosylcobalamin biosynthesis. In terms of biological role, catalyzes amidations at positions B, D, E, and G on adenosylcobyrinic A,C-diamide. NH(2) groups are provided by glutamine, and one molecule of ATP is hydrogenolyzed for each amidation. This chain is Cobyric acid synthase, found in Caulobacter sp. (strain K31).